The primary structure comprises 342 residues: S-adenosylmethionine:tRNA ribosyltransferase-isomerase (342 aa).

Belongs to the QueA family. Monomer.

It is found in the cytoplasm. It catalyses the reaction 7-aminomethyl-7-carbaguanosine(34) in tRNA + S-adenosyl-L-methionine = epoxyqueuosine(34) in tRNA + adenine + L-methionine + 2 H(+). It participates in tRNA modification; tRNA-queuosine biosynthesis. Functionally, transfers and isomerizes the ribose moiety from AdoMet to the 7-aminomethyl group of 7-deazaguanine (preQ1-tRNA) to give epoxyqueuosine (oQ-tRNA). The polypeptide is S-adenosylmethionine:tRNA ribosyltransferase-isomerase (Novosphingobium aromaticivorans (strain ATCC 700278 / DSM 12444 / CCUG 56034 / CIP 105152 / NBRC 16084 / F199)).